Consider the following 144-residue polypeptide: Transcriptional regulator MraZ (144 aa).

SpoVT-AbrB domains lie at 5–50 and 81–124; these read TFNH…ALPQ and AHEV…DRAA.

The protein belongs to the MraZ family. As to quaternary structure, forms oligomers.

It localises to the cytoplasm. Its subcellular location is the nucleoid. The sequence is that of Transcriptional regulator MraZ from Anaeromyxobacter dehalogenans (strain 2CP-C).